A 332-amino-acid polypeptide reads, in one-letter code: Galactosylgalactosylxylosylprotein 3-beta-glucuronosyltransferase 1 (332 aa).

Over 1–6 the chain is Cytoplasmic; the sequence is MPKRRD. Residues 3 to 5 are essential for transport from endoplasmic reticulum to Golgi apparatus and interaction with SAR1A; sequence KRR. Residues 7 to 27 form a helical; Signal-anchor for type II membrane protein membrane-spanning segment; that stretch reads ILAIVLIVLPWTLLITVWHQS. Topologically, residues 28–332 are lumenal; sequence TLAPLLAVHK…KGFTDPSVEI (305 aa). 91–93 contacts UDP-alpha-D-glucuronate; it reads PTY. Phosphothreonine occurs at positions 103 and 108. Asp122 serves as a coordination point for UDP-alpha-D-glucuronate. The N-linked (GlcNAc...) asparagine glycan is linked to Asn140. Residues Arg165 and Arg170 each contribute to the UDP-alpha-D-glucuronate site. Asn184 carries N-linked (GlcNAc...) asparagine glycosylation. Residue 195-197 coordinates UDP-alpha-D-glucuronate; the sequence is DDD. Mn(2+) is bound at residue Asp197. The segment at 243–252 is interaction with galactose moiety of substrate glycoprotein; the sequence is FDPHRPFAID. The active-site Proton donor/acceptor is the Glu282. An N-linked (GlcNAc...) asparagine glycan is attached at Asn301. 309–311 lines the UDP-alpha-D-glucuronate pocket; it reads HTR.

This sequence belongs to the glycosyltransferase 43 family. Homodimer. Interacts with SAR1A. Requires Mn(2+) as cofactor. In terms of processing, the soluble form derives from the membrane form by proteolytic processing.

It is found in the golgi apparatus membrane. The protein resides in the secreted. It catalyses the reaction 3-O-(beta-D-galactosyl-(1-&gt;3)-beta-D-galactosyl-(1-&gt;4)-beta-D-xylosyl)-L-seryl-[protein] + UDP-alpha-D-glucuronate = 3-O-(beta-D-GlcA-(1-&gt;3)-beta-D-Gal-(1-&gt;3)-beta-D-Gal-(1-&gt;4)-beta-D-Xyl)-L-seryl-[protein] + UDP + H(+). It participates in protein modification; protein glycosylation. Functionally, involved in the biosynthesis of L2/HNK-1 carbohydrate epitope on glycoproteins. Can also play a role in glycosaminoglycan biosynthesis. Substrates include asialo-orosomucoid (ASOR), asialo-fetuin, and asialo-neural cell adhesion molecule. Requires sphingomyelin for activity: stearoyl-sphingomyelin was the most effective, followed by palmitoyl-sphingomyelin and lignoceroyl-sphingomyelin. Activity was demonstrated only for sphingomyelin with a saturated fatty acid and not for that with an unsaturated fatty acid, regardless of the length of the acyl group. The polypeptide is Galactosylgalactosylxylosylprotein 3-beta-glucuronosyltransferase 1 (Pan troglodytes (Chimpanzee)).